The following is a 181-amino-acid chain: Translation initiation factor IF-3, chloroplastic (181 aa).

Belongs to the IF-3 family. As to quaternary structure, monomer.

Its subcellular location is the plastid. It localises to the chloroplast. Its function is as follows. IF-3 binds to the 30S ribosomal subunit and shifts the equilibrium between 70S ribosomes and their 50S and 30S subunits in favor of the free subunits, thus enhancing the availability of 30S subunits on which protein synthesis initiation begins. The sequence is that of Translation initiation factor IF-3, chloroplastic from Gracilaria tenuistipitata var. liui (Red alga).